The following is a 268-amino-acid chain: Leucyl/phenylalanyl-tRNA--protein transferase (268 aa).

The protein belongs to the L/F-transferase family.

It is found in the cytoplasm. The enzyme catalyses N-terminal L-lysyl-[protein] + L-leucyl-tRNA(Leu) = N-terminal L-leucyl-L-lysyl-[protein] + tRNA(Leu) + H(+). It carries out the reaction N-terminal L-arginyl-[protein] + L-leucyl-tRNA(Leu) = N-terminal L-leucyl-L-arginyl-[protein] + tRNA(Leu) + H(+). It catalyses the reaction L-phenylalanyl-tRNA(Phe) + an N-terminal L-alpha-aminoacyl-[protein] = an N-terminal L-phenylalanyl-L-alpha-aminoacyl-[protein] + tRNA(Phe). In terms of biological role, functions in the N-end rule pathway of protein degradation where it conjugates Leu, Phe and, less efficiently, Met from aminoacyl-tRNAs to the N-termini of proteins containing an N-terminal arginine or lysine. The protein is Leucyl/phenylalanyl-tRNA--protein transferase of Psychrobacter arcticus (strain DSM 17307 / VKM B-2377 / 273-4).